A 455-amino-acid chain; its full sequence is Succinyl-CoA--L-malate CoA-transferase alpha subunit (455 aa).

The tract at residues 1 to 58 (MAKASRLTRSTGQPTEVSEGQVTGTSEMPPTGEEPSGHAESKPPASDPMSTPGTGQEQ) is disordered. Polar residues-rich tracts occupy residues 7-28 (LTRS…TSEM) and 48-58 (PMSTPGTGQEQ). Residue aspartate 227 is the Nucleophile of the active site.

This sequence belongs to the CoA-transferase III family. Forms a large complex composed of six heterodimers (alpha, beta).

The enzyme catalyses succinyl-CoA + (S)-malate = (S)-malyl-CoA + succinate. It carries out the reaction (3S)-citramalate + succinyl-CoA = (3S)-citramalyl-CoA + succinate. In terms of biological role, involved in the 3-hydroxypropionate cycle used for autotrophic carbon dioxide fixation. Catalyzes the transfer of CoA moiety from succinyl-CoA to L-malate to yield L-malyl-CoA. The polypeptide is Succinyl-CoA--L-malate CoA-transferase alpha subunit (smtA) (Chloroflexus aurantiacus (strain ATCC 29366 / DSM 635 / J-10-fl)).